A 209-amino-acid chain; its full sequence is Iron-sulfur cluster assembly 2 homolog, mitochondrial (209 aa).

Residues 1–27 (MIRSIFKKNSSLPYFLKRSFITKPHSI) constitute a mitochondrion transit peptide. Fe cation is bound by residues C134, C199, and C201.

This sequence belongs to the HesB/IscA family. Requires Fe cation as cofactor.

The protein localises to the mitochondrion. In terms of biological role, involved in the maturation of mitochondrial 4Fe-4S proteins functioning late in the iron-sulfur cluster assembly pathway. May be involved in the binding of an intermediate of Fe/S cluster assembly. The sequence is that of Iron-sulfur cluster assembly 2 homolog, mitochondrial (isca2) from Dictyostelium discoideum (Social amoeba).